Here is a 149-residue protein sequence, read N- to C-terminus: Calmodulin (149 aa).

Residue Ala-2 is modified to N-acetylalanine. 4 consecutive EF-hand domains span residues 8 to 43, 44 to 79, 81 to 116, and 117 to 149; these read EQIA…LGQN, PTEA…KMKE, DSEE…LGEK, and LTDD…MVSK. Lys-14 carries the post-translational modification N6,N6-dimethyllysine. Residues Asp-21, Asp-23, Asp-25, Thr-27, Glu-32, Asp-57, Asp-59, Asn-61, Thr-63, Glu-68, Asp-94, Asp-96, Asn-98, and Glu-105 each coordinate Ca(2+). N6,N6,N6-trimethyllysine is present on Lys-116. Ca(2+)-binding residues include Asp-130, Asp-132, Asp-134, His-136, and Glu-141.

This sequence belongs to the calmodulin family. The pantophobiac mutant CAM2 is undermethylated on Lys-116.

Calmodulin mediates the control of a large number of enzymes, ion channels and other proteins by Ca(2+). Among the enzymes to be stimulated by the calmodulin-Ca(2+) complex are a number of protein kinases and phosphatases. The sequence is that of Calmodulin (CAM) from Paramecium tetraurelia.